Consider the following 694-residue polypeptide: NADPH--cytochrome P450 reductase (694 aa).

The Lumenal portion of the chain corresponds to 1–8 (MAQLDTLD). The helical transmembrane segment at 9 to 31 (LVVLAVLLVGSVAYFTKGTYWAV) threads the bilayer. Residues 32 to 694 (AKDPYASTGP…RGRYQEDVWS (663 aa)) are Cytoplasmic-facing. Residues 66-220 (CVIFYGSQTG…DFLAWKEPMW (155 aa)) form the Flavodoxin-like domain. FMN-binding positions include 72 to 77 (SQTGTA), 123 to 126 (ATYG), 168 to 177 (LGNNTYEHYN), and aspartate 203. The region spanning 276 to 537 (HNPFIAPIAE…HVRHSNFKLP (262 aa)) is the FAD-binding FR-type domain. Arginine 295 lines the NADP(+) pocket. Residues 450–453 (RYYS), 468–470 (TAV), and 485–488 (GVTT) contribute to the FAD site. NADP(+) contacts are provided by residues threonine 551, 613 to 614 (SR), 619 to 623 (KVYVQ), and glutamate 655. Tryptophan 693 is an FAD binding site.

Belongs to the NADPH--cytochrome P450 reductase family. The protein in the N-terminal section; belongs to the flavodoxin family. This sequence in the C-terminal section; belongs to the flavoprotein pyridine nucleotide cytochrome reductase family. FAD serves as cofactor. FMN is required as a cofactor.

Its subcellular location is the endoplasmic reticulum membrane. It localises to the mitochondrion outer membrane. It is found in the cell membrane. It carries out the reaction 2 oxidized [cytochrome P450] + NADPH = 2 reduced [cytochrome P450] + NADP(+) + H(+). This enzyme is required for electron transfer from NADP to cytochrome P450 in microsomes. It can also provide electron transfer to heme oxygenase and cytochrome B5. Involved in ergosterol biosynthesis. In Aspergillus niger, this protein is NADPH--cytochrome P450 reductase.